The primary structure comprises 142 residues: Large ribosomal subunit protein uL13 (142 aa).

Belongs to the universal ribosomal protein uL13 family. In terms of assembly, part of the 50S ribosomal subunit.

Functionally, this protein is one of the early assembly proteins of the 50S ribosomal subunit, although it is not seen to bind rRNA by itself. It is important during the early stages of 50S assembly. In Stenotrophomonas maltophilia (strain R551-3), this protein is Large ribosomal subunit protein uL13.